We begin with the raw amino-acid sequence, 287 residues long: ATP synthase gamma chain (287 aa).

Belongs to the ATPase gamma chain family. In terms of assembly, F-type ATPases have 2 components, CF(1) - the catalytic core - and CF(0) - the membrane proton channel. CF(1) has five subunits: alpha(3), beta(3), gamma(1), delta(1), epsilon(1). CF(0) has three main subunits: a, b and c.

The protein resides in the cell membrane. In terms of biological role, produces ATP from ADP in the presence of a proton gradient across the membrane. The gamma chain is believed to be important in regulating ATPase activity and the flow of protons through the CF(0) complex. This Staphylococcus carnosus (strain TM300) protein is ATP synthase gamma chain.